Consider the following 480-residue polypeptide: Protein nucleotidyltransferase YdiU (480 aa).

8 residues coordinate ATP: glycine 86, glycine 88, arginine 89, lysine 109, aspartate 121, glycine 122, arginine 172, and arginine 179. The active-site Proton acceptor is the aspartate 248. Mg(2+)-binding residues include asparagine 249 and aspartate 258. Aspartate 258 is an ATP binding site.

It belongs to the SELO family. Mg(2+) is required as a cofactor. Requires Mn(2+) as cofactor.

It catalyses the reaction L-seryl-[protein] + ATP = 3-O-(5'-adenylyl)-L-seryl-[protein] + diphosphate. The enzyme catalyses L-threonyl-[protein] + ATP = 3-O-(5'-adenylyl)-L-threonyl-[protein] + diphosphate. It carries out the reaction L-tyrosyl-[protein] + ATP = O-(5'-adenylyl)-L-tyrosyl-[protein] + diphosphate. The catalysed reaction is L-histidyl-[protein] + UTP = N(tele)-(5'-uridylyl)-L-histidyl-[protein] + diphosphate. It catalyses the reaction L-seryl-[protein] + UTP = O-(5'-uridylyl)-L-seryl-[protein] + diphosphate. The enzyme catalyses L-tyrosyl-[protein] + UTP = O-(5'-uridylyl)-L-tyrosyl-[protein] + diphosphate. Nucleotidyltransferase involved in the post-translational modification of proteins. It can catalyze the addition of adenosine monophosphate (AMP) or uridine monophosphate (UMP) to a protein, resulting in modifications known as AMPylation and UMPylation. This Salmonella paratyphi C (strain RKS4594) protein is Protein nucleotidyltransferase YdiU.